The primary structure comprises 314 residues: Ribosomal protein L11 methyltransferase (314 aa).

4 residues coordinate S-adenosyl-L-methionine: T161, G182, D204, and N248.

It belongs to the methyltransferase superfamily. PrmA family.

The protein localises to the cytoplasm. It carries out the reaction L-lysyl-[protein] + 3 S-adenosyl-L-methionine = N(6),N(6),N(6)-trimethyl-L-lysyl-[protein] + 3 S-adenosyl-L-homocysteine + 3 H(+). Its function is as follows. Methylates ribosomal protein L11. This is Ribosomal protein L11 methyltransferase from Listeria welshimeri serovar 6b (strain ATCC 35897 / DSM 20650 / CCUG 15529 / CIP 8149 / NCTC 11857 / SLCC 5334 / V8).